A 453-amino-acid chain; its full sequence is Putative long chain fatty acid-CoA ligase VraA (453 aa).

The protein belongs to the ATP-dependent AMP-binding enzyme family.

This is Putative long chain fatty acid-CoA ligase VraA (vraA) from Staphylococcus epidermidis (strain ATCC 35984 / DSM 28319 / BCRC 17069 / CCUG 31568 / BM 3577 / RP62A).